We begin with the raw amino-acid sequence, 251 residues long: Ubiquinone/menaquinone biosynthesis C-methyltransferase UbiE (251 aa).

S-adenosyl-L-methionine-binding positions include threonine 74, aspartate 95, and 123 to 124; that span reads NA.

This sequence belongs to the class I-like SAM-binding methyltransferase superfamily. MenG/UbiE family.

The catalysed reaction is a 2-demethylmenaquinol + S-adenosyl-L-methionine = a menaquinol + S-adenosyl-L-homocysteine + H(+). It carries out the reaction a 2-methoxy-6-(all-trans-polyprenyl)benzene-1,4-diol + S-adenosyl-L-methionine = a 5-methoxy-2-methyl-3-(all-trans-polyprenyl)benzene-1,4-diol + S-adenosyl-L-homocysteine + H(+). It participates in quinol/quinone metabolism; menaquinone biosynthesis; menaquinol from 1,4-dihydroxy-2-naphthoate: step 2/2. The protein operates within cofactor biosynthesis; ubiquinone biosynthesis. Functionally, methyltransferase required for the conversion of demethylmenaquinol (DMKH2) to menaquinol (MKH2) and the conversion of 2-polyprenyl-6-methoxy-1,4-benzoquinol (DDMQH2) to 2-polyprenyl-3-methyl-6-methoxy-1,4-benzoquinol (DMQH2). This Shewanella frigidimarina (strain NCIMB 400) protein is Ubiquinone/menaquinone biosynthesis C-methyltransferase UbiE.